We begin with the raw amino-acid sequence, 276 residues long: Dermonecrotic toxin LarSicTox-alphaIB2c (276 aa).

The active site involves histidine 5. Mg(2+)-binding residues include glutamate 25 and aspartate 27. Histidine 41 acts as the Nucleophile in catalysis. Cystine bridges form between cysteine 45/cysteine 51 and cysteine 47/cysteine 190. Position 85 (aspartate 85) interacts with Mg(2+). Asparagine 253 is a glycosylation site (N-linked (GlcNAc...) asparagine).

It belongs to the arthropod phospholipase D family. Class II subfamily. It depends on Mg(2+) as a cofactor. As to expression, expressed by the venom gland.

The protein resides in the secreted. It catalyses the reaction an N-(acyl)-sphingosylphosphocholine = an N-(acyl)-sphingosyl-1,3-cyclic phosphate + choline. It carries out the reaction an N-(acyl)-sphingosylphosphoethanolamine = an N-(acyl)-sphingosyl-1,3-cyclic phosphate + ethanolamine. The enzyme catalyses a 1-acyl-sn-glycero-3-phosphocholine = a 1-acyl-sn-glycero-2,3-cyclic phosphate + choline. The catalysed reaction is a 1-acyl-sn-glycero-3-phosphoethanolamine = a 1-acyl-sn-glycero-2,3-cyclic phosphate + ethanolamine. Functionally, dermonecrotic toxins cleave the phosphodiester linkage between the phosphate and headgroup of certain phospholipids (sphingolipid and lysolipid substrates), forming an alcohol (often choline) and a cyclic phosphate. This toxin acts on sphingomyelin (SM). It may also act on ceramide phosphoethanolamine (CPE), lysophosphatidylcholine (LPC) and lysophosphatidylethanolamine (LPE), but not on lysophosphatidylserine (LPS), and lysophosphatidylglycerol (LPG). It acts by transphosphatidylation, releasing exclusively cyclic phosphate products as second products. Induces dermonecrosis, hemolysis, increased vascular permeability, edema, inflammatory response, and platelet aggregation. This chain is Dermonecrotic toxin LarSicTox-alphaIB2c, found in Loxosceles arizonica (Arizona brown spider).